Reading from the N-terminus, the 152-residue chain is MGESIMEQVEAIIAPVITEQGLELVDVEYVKEGAHWYLRIYIDKEGGVDIDDCTNVSHLVSEVLDKHDPIAQAYMLEVSSPGLERPLKKDEDFERFTGKLVRVLTKEVYQGYKEFTGYLVGLIEDDIVLEYEKERMAIPRAIVDKANLTFEF.

Belongs to the RimP family.

It localises to the cytoplasm. Functionally, required for maturation of 30S ribosomal subunits. The sequence is that of Ribosome maturation factor RimP from Desulfitobacterium hafniense (strain DSM 10664 / DCB-2).